We begin with the raw amino-acid sequence, 101 residues long: Large ribosomal subunit protein uL24 (101 aa).

Belongs to the universal ribosomal protein uL24 family. In terms of assembly, part of the 50S ribosomal subunit.

Functionally, one of two assembly initiator proteins, it binds directly to the 5'-end of the 23S rRNA, where it nucleates assembly of the 50S subunit. Its function is as follows. One of the proteins that surrounds the polypeptide exit tunnel on the outside of the subunit. In Thermobifida fusca (strain YX), this protein is Large ribosomal subunit protein uL24.